A 301-amino-acid chain; its full sequence is Probable alpha-L-glutamate ligase 2 (301 aa).

In terms of domain architecture, ATP-grasp spans 104-287 (LQLLSRKSIG…VADKIIQFIE (184 aa)). ATP-binding positions include K141, 178–179 (EY), D187, and 211–213 (RSN). D248, E260, and N262 together coordinate Mg(2+). Mn(2+) is bound by residues D248, E260, and N262.

The protein belongs to the RimK family. Mg(2+) serves as cofactor. Requires Mn(2+) as cofactor.

This chain is Probable alpha-L-glutamate ligase 2, found in Shewanella denitrificans (strain OS217 / ATCC BAA-1090 / DSM 15013).